The chain runs to 392 residues: Stilbene synthase 5 (392 aa).

55–58 (KFNR) provides a ligand contact to substrate. The active site involves Cys-164. Residues Leu-267 and 305–307 (GGP) each bind substrate.

Belongs to the thiolase-like superfamily. Chalcone/stilbene synthases family. Homodimer.

Its subcellular location is the cytoplasm. The catalysed reaction is 4-coumaroyl-CoA + 3 malonyl-CoA + 3 H(+) = trans-resveratrol + 4 CO2 + 4 CoA. It participates in phytoalexin biosynthesis; 3,4',5-trihydroxystilbene biosynthesis; 3,4',5-trihydroxystilbene from trans-4-coumarate: step 2/2. In terms of biological role, mediates resistance to pathogens which are sensitive to stilbenes. The polypeptide is Stilbene synthase 5 (Vitis vinifera (Grape)).